A 287-amino-acid polypeptide reads, in one-letter code: Damage-control phosphatase PH1575 (287 aa).

The Subfamily I CxxC motif signature appears at 7–10 (CLTC). Mn(2+) is bound by residues Asp156, Asn157, and Asp191. The Subfamily I GNFE motif motif lies at 243–246 (GNFE). The Subfamily I KC motif motif lies at 263-264 (KC).

Belongs to the damage-control phosphatase family. Nucleotides phosphatase I subfamily. Requires Mn(2+) as cofactor. Ni(2+) serves as cofactor. It depends on [2Fe-2S] cluster as a cofactor.

With respect to regulation, activity is strongly promoted by Co(2+), Ni(2+), Mg(2+), Mn(2+), Ca(2+), Zn(2+) and Cu(2+). Activity is inhibited by EDTA. Functionally, metal-dependent phosphatase with probable damage-control functions. Shows phosphatase activity against p-nitrophenyl phosphate (pNPP), but natural substrates have not been identified yet. Low phosphatase activity against 8-oxo nucleotides suggests that it could hydrolyze oxidatively damaged purine nucleotides or their biosynthetic intermediates. The chain is Damage-control phosphatase PH1575 from Pyrococcus horikoshii (strain ATCC 700860 / DSM 12428 / JCM 9974 / NBRC 100139 / OT-3).